Reading from the N-terminus, the 105-residue chain is Large ribosomal subunit protein eL36 (105 aa).

The residue at position 62 (lysine 62) is an N6-acetyllysine.

The protein belongs to the eukaryotic ribosomal protein eL36 family. In terms of assembly, component of the large ribosomal subunit.

It is found in the cytoplasm. It localises to the cytosol. In terms of biological role, component of the large ribosomal subunit. The ribosome is a large ribonucleoprotein complex responsible for the synthesis of proteins in the cell. The polypeptide is Large ribosomal subunit protein eL36 (Rpl36) (Rattus norvegicus (Rat)).